A 200-amino-acid chain; its full sequence is uncharacterized protein (200 aa).

This is an uncharacterized protein from Commelina yellow mottle virus (CoYMV).